We begin with the raw amino-acid sequence, 352 residues long: Peptide chain release factor 1 (352 aa).

Residue Gln-233 is modified to N5-methylglutamine. Positions 288 to 309 (NAKDRKEQVGSGDRSERIRTYN) are disordered. Positions 289 to 306 (AKDRKEQVGSGDRSERIR) are enriched in basic and acidic residues.

This sequence belongs to the prokaryotic/mitochondrial release factor family. In terms of processing, methylated by PrmC. Methylation increases the termination efficiency of RF1.

The protein localises to the cytoplasm. Its function is as follows. Peptide chain release factor 1 directs the termination of translation in response to the peptide chain termination codons UAG and UAA. The protein is Peptide chain release factor 1 (prfA) of Helicobacter pylori (strain J99 / ATCC 700824) (Campylobacter pylori J99).